The chain runs to 321 residues: Glucokinase (321 aa).

Position 8–13 (8–13 (GDVGGT)) interacts with ATP.

This sequence belongs to the bacterial glucokinase family.

Its subcellular location is the cytoplasm. It carries out the reaction D-glucose + ATP = D-glucose 6-phosphate + ADP + H(+). This is Glucokinase from Escherichia coli O127:H6 (strain E2348/69 / EPEC).